Consider the following 413-residue polypeptide: Serine/threonine transporter SstT (413 aa).

The next 9 membrane-spanning stretches (helical) occupy residues 14–34 (GSLV…ASFS), 44–64 (LGTL…FILV), 82–102 (IVLL…VVSF), 141–161 (ALAS…GVAL), 178–198 (GVTF…FGLV), 217–237 (LMVL…LIVF), 290–310 (IPLG…VLTL), 330–350 (LVAA…LLLI), and 356–376 (LFGI…IIGV).

It belongs to the dicarboxylate/amino acid:cation symporter (DAACS) (TC 2.A.23) family.

The protein resides in the cell inner membrane. It catalyses the reaction L-serine(in) + Na(+)(in) = L-serine(out) + Na(+)(out). The catalysed reaction is L-threonine(in) + Na(+)(in) = L-threonine(out) + Na(+)(out). Its function is as follows. Involved in the import of serine and threonine into the cell, with the concomitant import of sodium (symport system). This chain is Serine/threonine transporter SstT, found in Edwardsiella ictaluri (strain 93-146).